The following is a 185-amino-acid chain: HTH-type transcriptional regulator Hpr (185 aa).

The HTH marR-type domain maps to 13–157; that stretch reads AMIFSQRIAQ…LIAILRNIYG (145 aa). A DNA-binding region (H-T-H motif) is located at residues 63-86; that stretch reads ISEIAKFGVMHVSTAFNFSKKLEE.

In terms of assembly, homodimer.

In terms of biological role, negative regulator of protease production and sporulation. This is HTH-type transcriptional regulator Hpr from Bacillus cytotoxicus (strain DSM 22905 / CIP 110041 / 391-98 / NVH 391-98).